A 143-amino-acid chain; its full sequence is Glycine cleavage system H protein 1 (143 aa).

Residues 26 to 107 form the Lipoyl-binding domain; it reads IYSVGMASIL…PYSSWIAKLK (82 aa). Residue Lys-67 is modified to N6-lipoyllysine.

It belongs to the GcvH family. The glycine cleavage system is composed of four proteins: P, T, L and H. It depends on (R)-lipoate as a cofactor.

The glycine cleavage system catalyzes the degradation of glycine. The H protein shuttles the methylamine group of glycine from the P protein to the T protein. In Aquifex aeolicus (strain VF5), this protein is Glycine cleavage system H protein 1.